The following is a 152-amino-acid chain: Superoxide dismutase [Cu-Zn] 1 (152 aa).

Residues His-45, His-47, and His-62 each contribute to the Cu cation site. Cys-56 and Cys-145 are joined by a disulfide. 4 residues coordinate Zn(2+): His-62, His-70, His-79, and Asp-82. His-119 lines the Cu cation pocket.

This sequence belongs to the Cu-Zn superoxide dismutase family. Homodimer. Interacts with DJ1A and CCS. It depends on Cu cation as a cofactor. Requires Zn(2+) as cofactor. As to expression, expressed in leaves (at protein level). The spatial localization is regulated by miR398-mediated silencing. Mostly present in flowers, old rosette leaves and inflorescence, and, to a lower extent, in cauline leaves, stems and roots.

The protein resides in the cytoplasm. The protein localises to the cytosol. It localises to the nucleus. The catalysed reaction is 2 superoxide + 2 H(+) = H2O2 + O2. In terms of biological role, destroys radicals which are normally produced within the cells and which are toxic to biological systems. The polypeptide is Superoxide dismutase [Cu-Zn] 1 (CSD1) (Arabidopsis thaliana (Mouse-ear cress)).